The chain runs to 598 residues: Elongation factor 4 (598 aa).

A tr-type G domain is found at 2–184; that stretch reads KNIRNFSIIA…EIVRKIPAPE (183 aa). Residues 14 to 19 and 131 to 134 contribute to the GTP site; these read DHGKST and NKID.

The protein belongs to the TRAFAC class translation factor GTPase superfamily. Classic translation factor GTPase family. LepA subfamily.

The protein resides in the cell inner membrane. The enzyme catalyses GTP + H2O = GDP + phosphate + H(+). Its function is as follows. Required for accurate and efficient protein synthesis under certain stress conditions. May act as a fidelity factor of the translation reaction, by catalyzing a one-codon backward translocation of tRNAs on improperly translocated ribosomes. Back-translocation proceeds from a post-translocation (POST) complex to a pre-translocation (PRE) complex, thus giving elongation factor G a second chance to translocate the tRNAs correctly. Binds to ribosomes in a GTP-dependent manner. The protein is Elongation factor 4 of Histophilus somni (strain 2336) (Haemophilus somnus).